A 418-amino-acid chain; its full sequence is Inward rectifier potassium channel 16 (418 aa).

Topologically, residues 1–67 (MSYYGSSYHI…VVDIFTTLVD (67 aa)) are cytoplasmic. Residues 68–94 (TKWRHMFVIFSLSYILSWLIFGSVFWL) form a helical membrane-spanning segment. The Extracellular segment spans residues 95–117 (IAFHHGDLLNDPDITPCVDNVHS). Residues 118–134 (FTGAFLFSLETQTTIGY) constitute an intramembrane region (helical; Pore-forming). A Selectivity filter motif is present at residues 131-136 (TIGYGY). Residues 135 to 143 (GYRCVTEEC) lie on the Extracellular side of the membrane. A helical membrane pass occupies residues 144-171 (SVAVLMVILQSILSCIINTFIIGAALAK). Residues 172–418 (MATARKRAQT…LNRISVESQM (247 aa)) lie on the Cytoplasmic side of the membrane. A phosphoserine mark is found at Ser-373 and Ser-375.

Belongs to the inward rectifier-type potassium channel (TC 1.A.2.1) family. KCNJ16 subfamily. As to quaternary structure, it forms heteromeric channels with Kir4.1/KCNJ10; this interaction is required for KCNJ16 localization to the basolateral membrane in kidney cells. As a heteromer with KCNJ10, may interact with MAGI1; this interaction may facilitate KCNJ10/KCNJ16 potassium channel expression at the basolateral membrane in kidney cells. May form heteromers with Kir2.1/KCNJ2. Can form heteromeric channels with Kir4.2/KCNJ15. As to expression, widely expressed, with highest levels in adult and fetal kidney (at protein level). In the kidney, expressed in the proximal and distal convoluted tubules, but not in glomeruli nor collecting ducts.

The protein localises to the membrane. It is found in the basolateral cell membrane. The catalysed reaction is K(+)(in) = K(+)(out). With respect to regulation, channel activity is strongly regulated by variations of cytosolic pH; channels are activated by alkaline and inhibited by acidic pH values. Activated by phosphatidylinositol 4,5 biphosphate (PtdIns(4,5)P2). Its function is as follows. Inward rectifier potassium channels are characterized by a greater tendency to allow potassium to flow into the cell rather than out of it. Their voltage dependence is regulated by the concentration of extracellular potassium; as external potassium is raised, the voltage range of the channel opening shifts to more positive voltages. The inward rectification is mainly due to the blockage of outward current by internal magnesium. KCNJ16 may be involved in the regulation of fluid and pH balance. In the kidney, together with KCNJ10, mediates basolateral K(+) recycling in distal tubules; this process is critical for Na(+) reabsorption at the tubules. This is Inward rectifier potassium channel 16 (KCNJ16) from Homo sapiens (Human).